A 984-amino-acid polypeptide reads, in one-letter code: Serine/threonine-protein kinase Nek9 (984 aa).

An N-acetylserine modification is found at Ser-2. Residues Ser-2, Ser-13, Ser-16, and Ser-20 each carry the phosphoserine modification. Residues 14–43 (INSDFGSESGGGGDSGPGPSAVPGPRAGGG) are disordered. At Tyr-52 the chain carries Phosphotyrosine. One can recognise a Protein kinase domain in the interval 52–308 (YIPIRVLGRG…ADALLDLPLL (257 aa)). 58 to 66 (LGRGAFGEA) lines the ATP pocket. Ser-76 is subject to Phosphoserine. Lys-81 provides a ligand contact to ATP. The Proton acceptor role is filled by Asp-176. Thr-210 is subject to Phosphothreonine; by autocatalysis. Thr-254 bears the Phosphothreonine mark. Ser-331 is modified (phosphoserine). Thr-333 is subject to Phosphothreonine. 6 RCC1 repeats span residues 388–444 (KELY…VTDE), 445–498 (GQLY…LTRN), 499–550 (KEVY…LTQS), 551–615 (GKVL…IDER), 616–668 (GRLL…ATDD), and 669–726 (NHIF…IVEK). Positions 732-896 (TIRSNSSGLS…GKALTSAACA (165 aa)) are interaction with NEK6. Residue Ser-741 is modified to Phosphoserine. The interval 744 to 790 (TVVQSSSPGGGIGGGGGGGGGGGGEEEDSQQESETPDPSGGFRGTME) is disordered. The segment covering 751–766 (PGGGIGGGGGGGGGGG) has biased composition (gly residues). Positions 767–778 (GEEEDSQQESET) are enriched in acidic residues. A phosphoserine mark is found at Ser-808 and Ser-839. Residue Thr-891 is modified to Phosphothreonine. The stretch at 896–945 (ACSALQVEVDRLQALVLKCLEEQQKLQQENLQMFTQLQKLNKKLEGGQQV) forms a coiled coil. Residues 940 to 984 (EGGQQVGMHSRGTQTAKEEMEMDPKPDLDSESWCLLGTDSCRPSL) are disordered. Ser-949 carries the phosphoserine modification. A compositionally biased stretch (basic and acidic residues) spans 955 to 967 (AKEEMEMDPKPDL). The residue at position 983 (Ser-983) is a Phosphoserine.

The protein belongs to the protein kinase superfamily. NEK Ser/Thr protein kinase family. NIMA subfamily. Homodimer; homodimerization is required to activate NEK7. Binds to Ran GTPase. Has a greater affinity for Ran-GDP over Ran-GTP. Interacts with SSRP1 and SUPT16H, the 2 subunits of the FACT complex. Interacts with DYNLL1; phosphorylation at Ser-949 strongly reduces DYNLL1 binding. The cofactor is Mg(2+). Post-translationally, autophosphorylated on serine and threonine residues. When complexed with FACT, exhibits markedly elevated phosphorylation on Thr-210. During mitosis, not phosphorylated on Thr-210. Phosphorylated by CDK1 in vitro.

The protein localises to the cytoplasm. It is found in the nucleus. It catalyses the reaction L-seryl-[protein] + ATP = O-phospho-L-seryl-[protein] + ADP + H(+). The catalysed reaction is L-threonyl-[protein] + ATP = O-phospho-L-threonyl-[protein] + ADP + H(+). Its activity is regulated as follows. Activated during mitosis by intramolecular autophosphorylation. Activity and autophosphorylation is activated by manganese &gt;&gt; magnesium ions. It is not cell-cycle regulated but activity is higher in G0-arrested cells. Pleiotropic regulator of mitotic progression, participating in the control of spindle dynamics and chromosome separation. Phosphorylates different histones, myelin basic protein, beta-casein, and BICD2. Phosphorylates histone H3 on serine and threonine residues and beta-casein on serine residues. Important for G1/S transition and S phase progression. Phosphorylates NEK6 and NEK7 and stimulates their activity by releasing the autoinhibitory functions of Tyr-108 and Tyr-97 respectively. This Mus musculus (Mouse) protein is Serine/threonine-protein kinase Nek9.